Consider the following 450-residue polypeptide: MEQAPPDPEKLLQPGPLEPLGGPGAVLEAAVGEENEGTREDGSGVDTMTGNNFWLKKIEISVSEAEKRTGRNAVNMQETYTAYLIETRSVEHADGQSVLTDSLWRRYSEFELLRNYLLVYYPHVVVPPLPEKRAEFVWHKLSADNMDPDFVERRRVGLENFLLRVASHPVLCRDKIFYSFLTQEGNWKETVNETGFQLKADSRLKALNATFRVKNPDKRFTELRHYSDELQSVISHLLRVRARVADRLYGVYKVHGNYGRVFSEWSAIEKEMGDGLQSAGHHMDVYASSIDDILEDEEHYADQLKEYLFYAEALRAVCRKHELMQYDLETAAQDLAAKKQQCEELATGTVRTFSLKGMTTKLFGQETPEQREARIKVLEEQINEGEQQLKSKNLEGREFVKNAWADIERFKEQKNRDLKEALISYAVMQISMCKKGIQVWTNAKECFSKM.

At Met-1 the chain carries N-acetylmethionine. Positions 1 to 46 (MEQAPPDPEKLLQPGPLEPLGGPGAVLEAAVGEENEGTREDGSGVD) are disordered. Residues 11–20 (LLQPGPLEPL) are compositionally biased toward low complexity. The PX domain occupies 61–187 (SVSEAEKRTG…YSFLTQEGNW (127 aa)). The a 1,2-diacyl-sn-glycero-3-phospho-(1D-myo-inositol-3-phosphate) site is built by Arg-106, Ser-108, Lys-132, and Arg-154.

This sequence belongs to the sorting nexin family. Heterodimer; heterodimerizes with SNX7 or SNX30. Interacts with WWC1/KIBRA. Identified in a complex with WWC1/KIBRA and dynein components DYNLL1 and DYNC1I2. Interacts with BIN1.

Its subcellular location is the early endosome. It is found in the early endosome membrane. Its function is as follows. Involved in the regulation of endocytosis and in several stages of intracellular trafficking. Plays a role in recycling endocytosed transferrin receptor and prevent its degradation. Involved in autophagosome assembly by regulating trafficking and recycling of phospholipid scramblase ATG9A. The chain is Sorting nexin-4 from Mus musculus (Mouse).